The chain runs to 751 residues: Collagen alpha-1(XIII) chain (751 aa).

A disordered region spans residues Met1 to Gly24. The Cytoplasmic segment spans residues Met1–Pro40. Residues Met1 to Pro119 are nonhelical region 1 (NC1). Gly residues predominate over residues Arg15 to Gly24. The chain crosses the membrane as a helical; Signal-anchor for type II membrane protein span at residues Gly41 to Ala59. Residues His60 to Lys751 lie on the Extracellular side of the membrane. Disordered regions lie at residues Ala108 to Arg127, Pro190 to His225, and Thr265 to Asp449. A compositionally biased stretch (pro residues) spans Asn116–Thr125. The triple-helical region 1 (COL1) stretch occupies residues Gly120–Tyr223. Residues Pro204–Gln213 are compositionally biased toward low complexity. Over residues Lys214–His225 the composition is skewed to basic and acidic residues. Positions Pro224–Thr273 are nonhelical region 2 (NC2). The interval Gly274–Gly445 is triple-helical region 2 (COL2). Pro residues-rich tracts occupy residues Pro278 to Ser288, Leu296 to Lys312, and Pro391 to Pro402. Low complexity predominate over residues Lys403–Lys436. Over residues Ala438–Met447 the composition is skewed to basic and acidic residues. A nonhelical region 3 (NC3) region spans residues Glu446–Met467. A glycan (N-linked (GlcNAc...) asparagine) is linked at Asn451. The interval Leu466–Lys751 is disordered. The segment at Gly468 to Asp733 is triple-helical region 3 (COL3). The segment covering Pro470–Thr484 has biased composition (pro residues). Composition is skewed to basic and acidic residues over residues His499–Pro509, Thr557–Arg568, and Glu586–Pro596. The span at Pro601–Pro613 shows a compositional bias: pro residues. The segment covering Leu615–Glu628 has biased composition (low complexity). Residues Ser630–Arg643 show a composition bias toward basic and acidic residues. Residues Pro658–Ala673 show a composition bias toward pro residues. Residues Asp684 to Leu699 show a composition bias toward low complexity. Residues Lys706 to Asp726 are compositionally biased toward basic and acidic residues. The nonhelical region 4 (NC4) stretch occupies residues Ala734–Lys751.

Homotrimer; disulfide-linked. Nucleation of the type XIII collagen triple helix is likely to occur at the N-terminal region with triple helix formation proceeding from the N- to the C-terminus. Interacts with FN1, perlecan/HSPG2 and NID2.

The protein localises to the cell membrane. It localises to the postsynaptic cell membrane. Functionally, involved in cell-matrix and cell-cell adhesion interactions that are required for normal development. May participate in the linkage between muscle fiber and basement membrane. May play a role in endochondral ossification of bone and branching morphogenesis of lung. Binds heparin. At neuromuscular junctions, may play a role in acetylcholine receptor clustering. The polypeptide is Collagen alpha-1(XIII) chain (Mus musculus (Mouse)).